Reading from the N-terminus, the 159-residue chain is UPF0756 membrane protein PTH_1668 (159 aa).

Transmembrane regions (helical) follow at residues 15-37 (ILIT…SSCI), 61-81 (LGLV…KLTI), 117-137 (PEII…LRGT), and 138-158 (PCGP…ASLF).

This sequence belongs to the UPF0756 family.

Its subcellular location is the cell membrane. The chain is UPF0756 membrane protein PTH_1668 from Pelotomaculum thermopropionicum (strain DSM 13744 / JCM 10971 / SI).